Reading from the N-terminus, the 484-residue chain is Aspartyl/glutamyl-tRNA(Asn/Gln) amidotransferase subunit B (484 aa).

It belongs to the GatB/GatE family. GatB subfamily. Heterotrimer of A, B and C subunits.

It catalyses the reaction L-glutamyl-tRNA(Gln) + L-glutamine + ATP + H2O = L-glutaminyl-tRNA(Gln) + L-glutamate + ADP + phosphate + H(+). The enzyme catalyses L-aspartyl-tRNA(Asn) + L-glutamine + ATP + H2O = L-asparaginyl-tRNA(Asn) + L-glutamate + ADP + phosphate + 2 H(+). Its function is as follows. Allows the formation of correctly charged Asn-tRNA(Asn) or Gln-tRNA(Gln) through the transamidation of misacylated Asp-tRNA(Asn) or Glu-tRNA(Gln) in organisms which lack either or both of asparaginyl-tRNA or glutaminyl-tRNA synthetases. The reaction takes place in the presence of glutamine and ATP through an activated phospho-Asp-tRNA(Asn) or phospho-Glu-tRNA(Gln). The chain is Aspartyl/glutamyl-tRNA(Asn/Gln) amidotransferase subunit B from Anaeromyxobacter sp. (strain K).